Reading from the N-terminus, the 243-residue chain is Orotidine 5'-phosphate decarboxylase (243 aa).

Substrate-binding positions include Asp18, Lys39, 66 to 75 (DLKFHDIPAT), Thr130, Arg192, Gln201, Gly221, and Arg222. Lys68 serves as the catalytic Proton donor.

Belongs to the OMP decarboxylase family. Type 1 subfamily. Homodimer.

The enzyme catalyses orotidine 5'-phosphate + H(+) = UMP + CO2. The protein operates within pyrimidine metabolism; UMP biosynthesis via de novo pathway; UMP from orotate: step 2/2. Its function is as follows. Catalyzes the decarboxylation of orotidine 5'-monophosphate (OMP) to uridine 5'-monophosphate (UMP). This Synechococcus sp. (strain CC9902) protein is Orotidine 5'-phosphate decarboxylase.